The primary structure comprises 938 residues: MIDYKNTLNLPKTQFAMRGNLAIREPIMLKRWHQQDLYQLICQATQGKKTFFLHDGPPYANGSIHIGHSVNKILKDIIIKSKRLMGYCSPYIPGWDCHGLPIELKVEQLIGKPGKKVSASEFIIACRNYASEQVTWQKKDFIRLGVLGDWDNIYRTMDFHTEANIIRTLSKIIENGHVYQGNKPVHWCIDCRSALAEAEVEYYDYTSPSIYVIFAATNTHDVAARFGIPNVLSSISFLVWTTTPWTIPANRAISIHPNLNYQLVKVNQQGFILAADLVTSVLTYLGIQNWTVVKNIKGYVLELLRFSHPFMKFDVPVVLSNHVTINVGTGVVHTSPSHGPDDYLIGREYNLEIVNIVGPDGCYLPGTFSLLDGTSVYQSNQTVISLLKDRGALLHTGTIQHSYPHCWRHKTPLIFRATPQWFISMDKKKLRQQSLKEIKKIQWIPSNSQASITNMVNNRQDWCISRQRIWGVPMSLFVHNHTKKLHPQTSEIMEYVAKQVEKKGIQAWWDLDPIKILGDDIVNYSKINDILDVWFDSGSTHSSVINAQTEFANHEIDMYLEGADQHRGWFMSSLISSTAIKGKAPYKTVITHGFAVDSNGRKMSKSIGNVVSPQQVVDKLGADILRLWVASTNYTDDMTISDEILKRSVDTYRRIRNTARFLLANLNGFEPKQHSVSIDKMIILDQWAIDRAQVAQDEIIAAYNSYEFHSVVQRIMQFCSVEMGSFYLDIIKDRQYTTQYNSIARRSCQTALFHIIEAMVRWIAPIISFTADEIWGFIPGKRSPSVFIEEWYKNLSRLDAEQHMNDTYWNTLLQVRSDVNYLIEQARIKKNIGSSLETQVTLYSEPILAMQLRQLGNELHFVLLTSAVQIADYQEADNNALQSTRIKGLKITLNHATGRKCQRCWHYEQDIGNNTQYPEICGRCVINIAGNGEERKFV.

A 'HIGH' region motif is present at residues 58-68 (PYANGSIHIGH). Position 561 (E561) interacts with L-isoleucyl-5'-AMP. The short motif at 602–606 (KMSKS) is the 'KMSKS' region element. K605 contributes to the ATP binding site. C901, C904, C921, and C924 together coordinate Zn(2+).

The protein belongs to the class-I aminoacyl-tRNA synthetase family. IleS type 1 subfamily. In terms of assembly, monomer. Requires Zn(2+) as cofactor.

It is found in the cytoplasm. It catalyses the reaction tRNA(Ile) + L-isoleucine + ATP = L-isoleucyl-tRNA(Ile) + AMP + diphosphate. Its function is as follows. Catalyzes the attachment of isoleucine to tRNA(Ile). As IleRS can inadvertently accommodate and process structurally similar amino acids such as valine, to avoid such errors it has two additional distinct tRNA(Ile)-dependent editing activities. One activity is designated as 'pretransfer' editing and involves the hydrolysis of activated Val-AMP. The other activity is designated 'posttransfer' editing and involves deacylation of mischarged Val-tRNA(Ile). The polypeptide is Isoleucine--tRNA ligase (Baumannia cicadellinicola subsp. Homalodisca coagulata).